The following is a 213-amino-acid chain: Vacuolar protein sorting-associated protein 32 homolog 1 (213 aa).

Coiled-coil stretches lie at residues K11–T42 and T118–Q176. Residues I180–L213 are disordered.

Belongs to the SNF7 family. As to quaternary structure, component of the endosomal sorting required for transport complex III (ESCRT-III), composed at least of VPS2, VPS20, VPS24 and VPS32. Interacts with SKD1. Interacts with BRO1/ALIX.

The protein localises to the endosome. Its function is as follows. Component of the ESCRT-III complex, which is required for multivesicular bodies (MVBs) formation and sorting of endosomal cargo proteins into MVBs. The ESCRT-III complex is probably involved in the concentration of MVB cargo. In Arabidopsis thaliana (Mouse-ear cress), this protein is Vacuolar protein sorting-associated protein 32 homolog 1 (VPS32.1).